The primary structure comprises 359 residues: Protein FLX-like 2 (359 aa).

A compositionally biased stretch (basic residues) spans 1-16 (MESKGRIHPSHHHMRR). Residues 1–27 (MESKGRIHPSHHHMRRPLPGPGGCIAH) are disordered. Residues 83-236 (HGSLRQELAA…EKLQAQLMNN (154 aa)) are a coiled coil. Residues 303-359 (TQPGYFPQRPGYNFPRGPPGSYDPTTRLPTGPYGAPFPPGPSNNTPYAGTHGNPSRR) form a disordered region.

Belongs to the FLX family. In terms of assembly, interacts with FRI.

Has no transcriptional activation activity. This is Protein FLX-like 2 (FLXL2) from Arabidopsis thaliana (Mouse-ear cress).